The primary structure comprises 135 residues: UPF0355 protein MRSA252 (135 aa).

This sequence belongs to the UPF0355 family.

In Staphylococcus aureus (strain MRSA252), this protein is UPF0355 protein MRSA252.